A 716-amino-acid chain; its full sequence is Polyribonucleotide nucleotidyltransferase (716 aa).

Residues D485 and D491 each contribute to the Mg(2+) site. In terms of domain architecture, KH spans 552–611 (PRFTTIKIDQDKIKDVIGKGGAVIRELTESTNTNIEIGDDGTIKVAASDQADADAAIEKI). The region spanning 621–689 (GKIYQGKVAR…RQGRVRLSMK (69 aa)) is the S1 motif domain. Over residues 689-698 (KEAAEKKEEP) the composition is skewed to basic and acidic residues. Positions 689–716 (KEAAEKKEEPAPEAPAEPAAEEENKSEE) are disordered. Residues 707-716 (AAEEENKSEE) show a composition bias toward acidic residues.

Belongs to the polyribonucleotide nucleotidyltransferase family. In terms of assembly, component of the RNA degradosome, which is a multiprotein complex involved in RNA processing and mRNA degradation. It depends on Mg(2+) as a cofactor.

It is found in the cytoplasm. The enzyme catalyses RNA(n+1) + phosphate = RNA(n) + a ribonucleoside 5'-diphosphate. Its function is as follows. Involved in mRNA degradation. Catalyzes the phosphorolysis of single-stranded polyribonucleotides processively in the 3'- to 5'-direction. The chain is Polyribonucleotide nucleotidyltransferase from Idiomarina loihiensis (strain ATCC BAA-735 / DSM 15497 / L2-TR).